The sequence spans 214 residues: Transmembrane emp24 domain-containing protein p24beta3 (214 aa).

Positions 1–27 (MERRQAKIHVFVLIGLILLNSINQISS) are cleaved as a signal peptide. The Lumenal segment spans residues 28-178 (LSVTVNDEEC…RHTNESTRKR (151 aa)). Positions 35–122 (EECVQEYVLY…PETVSFYIHV (88 aa)) constitute a GOLD domain. Residues 140 to 158 (VNVKIAELREALESVVAEQ) are a coiled coil. Arg164 and Arg169 each carry omega-N-methylated arginine. Asn172 is a glycosylation site (N-linked (GlcNAc...) asparagine). The chain crosses the membrane as a helical span at residues 179-199 (VIFYTVGEYIFLAAASGLQVL). Residues 200–214 (YIRKLFSKSVAYNRV) lie on the Cytoplasmic side of the membrane. The COPII vesicle coat-binding signature appears at 204-205 (LF). The short motif at 204-214 (LFSKSVAYNRV) is the COPI vesicle coat-binding element. Positions 213 to 214 (RV) match the Required for the export from the endoplasmic reticulum to the Golgi motif.

It belongs to the EMP24/GP25L family. Probably oligomerizes with other members of the EMP24/GP25L family. Associates with the COPI vesicle coat (coatomer). Associates with the COPII vesicle coat (coatomer).

The protein localises to the golgi apparatus. It localises to the cis-Golgi network membrane. The protein resides in the golgi stack membrane. Its function is as follows. Involved in vesicular protein trafficking. Mainly functions in the early secretory pathway but also in post-Golgi membranes. Thought to act as cargo receptor at the lumenal side for incorporation of secretory cargo molecules into transport vesicles and to be involved in vesicle coat formation at the cytoplasmic side. The protein is Transmembrane emp24 domain-containing protein p24beta3 of Arabidopsis thaliana (Mouse-ear cress).